Here is a 416-residue protein sequence, read N- to C-terminus: Leu/Ile/Val-binding protein homolog 4 (416 aa).

The signal sequence occupies residues 1-26; it reads MSLKVFLQAGVACAALSLAGAAGASA.

It belongs to the leucine-binding protein family.

In terms of biological role, component of an amino-acid transport system. In Brucella abortus (strain 2308), this protein is Leu/Ile/Val-binding protein homolog 4.